Reading from the N-terminus, the 216-residue chain is Pyrrolidone-carboxylate peptidase (216 aa).

Residues E80, C143, and H167 contribute to the active site.

It belongs to the peptidase C15 family. In terms of assembly, homotetramer.

The protein localises to the cytoplasm. It carries out the reaction Release of an N-terminal pyroglutamyl group from a polypeptide, the second amino acid generally not being Pro.. Removes 5-oxoproline from various penultimate amino acid residues except L-proline. This is Pyrrolidone-carboxylate peptidase (pcp) from Streptomyces coelicolor (strain ATCC BAA-471 / A3(2) / M145).